The chain runs to 332 residues: DNA-directed RNA polymerase subunit alpha (332 aa).

Residues 1–227 (MKKFAETPFL…VMYSQMSVFN (227 aa)) are alpha N-terminal domain (alpha-NTD). The alpha C-terminal domain (alpha-CTD) stretch occupies residues 248–332 (KELVIRIDDL…LRRKLEQLKA (85 aa)).

The protein belongs to the RNA polymerase alpha chain family. Homodimer. The RNAP catalytic core consists of 2 alpha, 1 beta, 1 beta' and 1 omega subunit. When a sigma factor is associated with the core the holoenzyme is formed, which can initiate transcription.

It catalyses the reaction RNA(n) + a ribonucleoside 5'-triphosphate = RNA(n+1) + diphosphate. In terms of biological role, DNA-dependent RNA polymerase catalyzes the transcription of DNA into RNA using the four ribonucleoside triphosphates as substrates. The protein is DNA-directed RNA polymerase subunit alpha of Aliarcobacter butzleri (strain RM4018) (Arcobacter butzleri).